We begin with the raw amino-acid sequence, 75 residues long: UPF0346 protein LGAS_0911 (75 aa).

The protein belongs to the UPF0346 family.

This is UPF0346 protein LGAS_0911 from Lactobacillus gasseri (strain ATCC 33323 / DSM 20243 / BCRC 14619 / CIP 102991 / JCM 1131 / KCTC 3163 / NCIMB 11718 / NCTC 13722 / AM63).